We begin with the raw amino-acid sequence, 570 residues long: Proline--tRNA ligase (570 aa).

It belongs to the class-II aminoacyl-tRNA synthetase family. ProS type 1 subfamily. As to quaternary structure, homodimer.

It localises to the cytoplasm. The enzyme catalyses tRNA(Pro) + L-proline + ATP = L-prolyl-tRNA(Pro) + AMP + diphosphate. Its function is as follows. Catalyzes the attachment of proline to tRNA(Pro) in a two-step reaction: proline is first activated by ATP to form Pro-AMP and then transferred to the acceptor end of tRNA(Pro). As ProRS can inadvertently accommodate and process non-cognate amino acids such as alanine and cysteine, to avoid such errors it has two additional distinct editing activities against alanine. One activity is designated as 'pretransfer' editing and involves the tRNA(Pro)-independent hydrolysis of activated Ala-AMP. The other activity is designated 'posttransfer' editing and involves deacylation of mischarged Ala-tRNA(Pro). The misacylated Cys-tRNA(Pro) is not edited by ProRS. The polypeptide is Proline--tRNA ligase (Wolinella succinogenes (strain ATCC 29543 / DSM 1740 / CCUG 13145 / JCM 31913 / LMG 7466 / NCTC 11488 / FDC 602W) (Vibrio succinogenes)).